The chain runs to 442 residues: Inner membrane protein PPF-1, chloroplastic (442 aa).

At Met1–Gly108 the chain is on the lumenal side. The chain crosses the membrane as a helical span at residues Leu109 to Val129. Residues Lys130–Pro183 are Stromal-facing. The chain crosses the membrane as a helical span at residues Leu184–Leu204. Residues Ser205–Phe296 are Lumenal-facing. Residues Leu297–Phe317 form a helical membrane-spanning segment. Topologically, residues Thr318–Ala442 are stromal. 2 disordered regions span residues Ala350–Lys371 and Pro390–Ala442. Residues Ser358–Lys371 show a composition bias toward basic and acidic residues. Positions Glu414–Phe427 are enriched in polar residues. Residues Arg431 to Ala442 show a composition bias toward basic residues.

Belongs to the OXA1/ALB3/YidC (TC 2.A.9.2) family. As to expression, highly expressed in apical buds. Low levels of expression in leaves. Not expressed in roots, and stems.

The protein localises to the plastid. It localises to the chloroplast thylakoid membrane. May be required for the insertion of some integral membrane proteins into the chloroplast thylakoid membrane. May play a role in inhibiting senescence. This chain is Inner membrane protein PPF-1, chloroplastic (PPF-1), found in Pisum sativum (Garden pea).